Consider the following 318-residue polypeptide: Large ribosomal subunit protein uL10 (318 aa).

Tyrosine 24 carries the post-translational modification Phosphotyrosine. The residue at position 59 (threonine 59) is a Phosphothreonine. Lysine 264 participates in a covalent cross-link: Glycyl lysine isopeptide (Lys-Gly) (interchain with G-Cter in ubiquitin). Lysine 298 participates in a covalent cross-link: Glycyl lysine isopeptide (Lys-Gly) (interchain with G-Cter in SUMO1); alternate. Residue lysine 298 forms a Glycyl lysine isopeptide (Lys-Gly) (interchain with G-Cter in SUMO2); alternate linkage. The disordered stretch occupies residues 298-318 (KVEAKEESEESDEDMGFGLFD). Residues 303–312 (EESEESDEDM) show a composition bias toward acidic residues. Phosphoserine is present on residues serine 305 and serine 308.

It belongs to the universal ribosomal protein uL10 family. P0 forms a pentameric complex by interaction with dimers of P1 and P2. Identified in a IGF2BP1-dependent mRNP granule complex containing untranslated mRNAs. Interacts with APEX1. Interacts with FMR1 isoform 6. Ubiquitinated at Lys-264 by RNF14 and RNF25 in response to ribosome collisions (ribosome stalling).

The protein localises to the nucleus. The protein resides in the cytoplasm. In terms of biological role, ribosomal protein P0 is the functional equivalent of E.coli protein L10. This Oryctolagus cuniculus (Rabbit) protein is Large ribosomal subunit protein uL10 (RPLP0).